Reading from the N-terminus, the 139-residue chain is Acidic phospholipase A2 DE-I (139 aa).

The N-terminal stretch at 1 to 16 is a signal peptide; the sequence is MRTLWIMAVLLLGVEG. Cystine bridges form between C42–C132, C44–C60, C59–C111, C65–C139, C66–C104, C73–C97, and C91–C102. 3 residues coordinate Ca(2+): Y43, G45, and G47. H63 is a catalytic residue. D64 is a binding site for Ca(2+). D105 is a catalytic residue.

Ca(2+) serves as cofactor. In terms of tissue distribution, expressed by the venom gland.

The protein resides in the secreted. It carries out the reaction a 1,2-diacyl-sn-glycero-3-phosphocholine + H2O = a 1-acyl-sn-glycero-3-phosphocholine + a fatty acid + H(+). Its function is as follows. Snake venom phospholipase A2 (PLA2) that inhibits the ADP- and collagen-induced human platelet aggregation. Exhibits high hydrolytic activities and preferred the anionic micelles to the zwitterionic micelles. PLA2 catalyzes the calcium-dependent hydrolysis of the 2-acyl groups in 3-sn-phosphoglycerides. The sequence is that of Acidic phospholipase A2 DE-I from Ovophis okinavensis (Ryukyu Island pit viper).